We begin with the raw amino-acid sequence, 516 residues long: uncharacterized protein (516 aa).

The next 9 membrane-spanning stretches (helical) occupy residues 183–203 (SAADLPIWEAASGAVLVGDGV), 261–281 (VLKTTFGFLAFGLIVSATYII), 308–328 (VMNGFLACLVMLATGIGTALL), 329–349 (LDHQFALVASVYLALTLAYSF), 356–376 (LLDVTVIGALFTLRIVMGQVL), 379–399 (LAFSPWLFSFSVMFFISLALA), 430–450 (LGHGLASASASIVIMLLFLAL), 461–481 (PAWLYVAPLGVSIWLQRIWLL), and 492–512 (IVFALNDKTSWFIGALIASAF).

Its subcellular location is the cell membrane. In terms of biological role, possible permease/transporter. This is an uncharacterized protein from Sinorhizobium fredii (strain NBRC 101917 / NGR234).